A 128-amino-acid chain; its full sequence is Fruiting body differentiation protein 16 (128 aa).

The signal sequence occupies residues 1 to 19 (MLFSHIVFVALSVFGLVQA).

In terms of biological role, plays a role in the regulation of fruiting body development. This is Fruiting body differentiation protein 16 from Flammulina velutipes (Agaricus velutipes).